A 637-amino-acid polypeptide reads, in one-letter code: Neurexin-3-beta (637 aa).

An N-terminal signal peptide occupies residues 1-35 (MHLRIHARRSPPRRPAWTLGIWFLFWGCIVSSVWS). Residues 36-562 (SSNVASSSST…EVIRESSSTT (527 aa)) lie on the Extracellular side of the membrane. Residues 43-52 (SSTSSSPGSH) are compositionally biased toward low complexity. Positions 43-65 (SSTSSSPGSHSQHEHHFHGSKHH) are disordered. Positions 55 to 65 (HEHHFHGSKHH) are enriched in basic residues. In terms of domain architecture, Laminin G-like spans 85–255 (ATYIFGKSGG…NPNIKINGSV (171 aa)). Ca(2+) contacts are provided by Asp137 and Ile154. An N-linked (GlcNAc...) asparagine glycan is attached at Asn184. Ca(2+)-binding residues include Ile206 and Asn208. Residues Asn252 and Asn296 are each glycosylated (N-linked (GlcNAc...) asparagine). The disordered stretch occupies residues 289–310 (ATTTTRKNRSTASIQPTSDDLV). Over residues 298-310 (STASIQPTSDDLV) the composition is skewed to polar residues. Ser312 carries an O-linked (Xyl...) (heparan sulfate) serine glycan. The helical transmembrane segment at 563–583 (GMVVGIVAAAALCILILLYAM) threads the bilayer. Residues 584-637 (YKYRNRDEGSYQVDETRNYISNSAQSNGTLMKEKQQSSKSGHKKQKNKDREYYV) are Cytoplasmic-facing. The interval 605 to 637 (NSAQSNGTLMKEKQQSSKSGHKKQKNKDREYYV) is disordered.

It belongs to the neurexin family. Weakly interacts with CBLN1 and CBLN2. Very weak binding, if any, to CBLN4. Specific isoforms bind neuroligins NLGN1, NLGN2 and NLGN3. Interacts with CLSTN3. Post-translationally, processed by alpha-secretase leading to the formation of an extracellular soluble protein as well as a C-terminal membrane-embedded fragment (CTF). Proteolysis of these CTFs by gamma-secretase releases intracellular domains (ICDs) and extracellular peptides. In terms of processing, O-glycosylated; contains heparan sulfate. Heparan sulfate attachment is required for synapse development by mediating interactions with neuroligins. Expressed in the blood vessel walls (at protein level).

The protein localises to the presynaptic cell membrane. Neuronal cell surface protein that may be involved in cell recognition and cell adhesion. May mediate intracellular signaling. Functions as part of a trans-synaptic complex by binding to cerebellins and postsynaptic GRID1. This interaction helps regulate the activity of NMDA and AMPA receptors at hippocampal synapses without affecting synapse formation. NRXN3B-CBLN2-GRID1 complex transduce presynaptic signals into postsynaptic AMPAR response. The protein is Neurexin-3-beta of Homo sapiens (Human).